Reading from the N-terminus, the 191-residue chain is Small ribosomal subunit protein bS6 (191 aa).

The tract at residues 168–191 (KVNLTRKPTPNKSSENKQKVEKQA) is disordered. The segment covering 181 to 191 (SENKQKVEKQA) has biased composition (basic and acidic residues).

It belongs to the bacterial ribosomal protein bS6 family.

Functionally, binds together with bS18 to 16S ribosomal RNA. The sequence is that of Small ribosomal subunit protein bS6 from Mycoplasmoides gallisepticum (strain R(low / passage 15 / clone 2)) (Mycoplasma gallisepticum).